The chain runs to 62 residues: Potassium channel toxin alpha-KTx 22.1 (62 aa).

Positions 1-18 (MQKLFIVFVLFCILRLDA) are cleaved as a signal peptide. Intrachain disulfides connect Cys28–Cys46, Cys33–Cys59, and Cys37–Cys61.

It belongs to the short scorpion toxin superfamily. Potassium channel inhibitor family. Alpha-KTx 22 subfamily. As to expression, expressed by the venom gland.

It localises to the secreted. May block potassium channels. This chain is Potassium channel toxin alpha-KTx 22.1, found in Olivierus martensii (Manchurian scorpion).